A 293-amino-acid chain; its full sequence is Aromatic amino acid exporter YddG (293 aa).

The Cytoplasmic portion of the chain corresponds to M1 to A6. A helical membrane pass occupies residues T7–V27. Residues V15 to L137 form the EamA 1 domain. The Periplasmic portion of the chain corresponds to S28–P33. A helical transmembrane segment spans residues V34 to L54. Over P55 to R63 the chain is Cytoplasmic. The helical transmembrane segment at Y64–G84 threads the bilayer. Residues Y85–A92 lie on the Periplasmic side of the membrane. A helical membrane pass occupies residues I93–F113. Residues N114–N119 lie on the Cytoplasmic side of the membrane. Residues W120–E140 traverse the membrane as a helical segment. The Periplasmic segment spans residues N141 to E147. The helical transmembrane segment at I148–I168 threads the bilayer. Residues F167 to L285 form the EamA 2 domain. Residues W169–G182 lie on the Cytoplasmic side of the membrane. A helical membrane pass occupies residues F183 to L203. At T204 to P207 the chain is on the periplasmic side. Residues A208 to F228 form a helical membrane-spanning segment. Over A229–T243 the chain is Cytoplasmic. A helical membrane pass occupies residues I244–L264. At S265–P267 the chain is on the periplasmic side. A helical membrane pass occupies residues L268 to L288. Residues A289–R293 are Cytoplasmic-facing.

Belongs to the drug/metabolite transporter (DMT) superfamily. Aromatic amino acid/paraquat exporter (ArAA/P-E) (TC 2.A.7.17) family.

It is found in the cell inner membrane. In terms of biological role, amino acid transporter with broad substrate specificity. Required for resistance to methyl viologen. May function with OmpD porin. The protein is Aromatic amino acid exporter YddG (yddG) of Salmonella typhimurium (strain 14028s / SGSC 2262).